Consider the following 82-residue polypeptide: UPF0213 protein SSP2268 (82 aa).

The GIY-YIG domain occupies 2-77 (DKHYIYIVKC…KTFSRQKKLK (76 aa)).

This sequence belongs to the UPF0213 family.

The polypeptide is UPF0213 protein SSP2268 (Staphylococcus saprophyticus subsp. saprophyticus (strain ATCC 15305 / DSM 20229 / NCIMB 8711 / NCTC 7292 / S-41)).